The primary structure comprises 377 residues: Flagellin D (377 aa).

Residues 104-128 (NSKADRVAIQEEVTALNDELNRIAE) are a coiled coil.

Belongs to the bacterial flagellin family. As to quaternary structure, heteromer of multiple flagellin subunits including FlaA, FlaB, FlaC, FlaD and possibly FlaE.

The protein localises to the secreted. It is found in the bacterial flagellum. In terms of biological role, flagellin is the subunit protein which polymerizes to form the filaments of bacterial flagella. FlaD is not essential for flagellar synthesis and motility. May have a role in virulence unrelated to motility. In Vibrio anguillarum (Listonella anguillarum), this protein is Flagellin D (flaD).